The primary structure comprises 97 residues: RxLR effector protein CRE10 (97 aa).

The signal sequence occupies residues 1–21 (MRLSYILVVVIAVTLQACVCA). Positions 48–66 (RLLRGVKKRTAEREVQEER) match the RxLR-dEER motif.

It belongs to the RxLR effector family.

The protein resides in the secreted. It localises to the host cell. Its function is as follows. Effector that is involved in host plant infection. Contributes to virulence during the early infection stage, by inhibiting plant defense responses induced by both PAMP-triggered immunity (PTI) and effector-triggered immunity (ETI). In Phytophthora infestans (strain T30-4) (Potato late blight agent), this protein is RxLR effector protein CRE10.